The chain runs to 336 residues: Anthranilate phosphoribosyltransferase (336 aa).

5-phospho-alpha-D-ribose 1-diphosphate is bound by residues Gly-83, 86-87 (GD), Thr-91, 93-96 (NIST), 111-119 (KHGNRSVSS), and Ser-123. Gly-83 is an anthranilate binding site. Residue Ser-95 coordinates Mg(2+). Residue Asn-114 participates in anthranilate binding. Anthranilate is bound at residue Arg-169. Asp-227 and Glu-228 together coordinate Mg(2+).

The protein belongs to the anthranilate phosphoribosyltransferase family. In terms of assembly, homodimer. The cofactor is Mg(2+).

The enzyme catalyses N-(5-phospho-beta-D-ribosyl)anthranilate + diphosphate = 5-phospho-alpha-D-ribose 1-diphosphate + anthranilate. It functions in the pathway amino-acid biosynthesis; L-tryptophan biosynthesis; L-tryptophan from chorismate: step 2/5. Catalyzes the transfer of the phosphoribosyl group of 5-phosphorylribose-1-pyrophosphate (PRPP) to anthranilate to yield N-(5'-phosphoribosyl)-anthranilate (PRA). The chain is Anthranilate phosphoribosyltransferase from Vibrio campbellii (strain ATCC BAA-1116).